The primary structure comprises 446 residues: MTVDAPELLEKLRITDAGANGADMSSSTSAAANGTGKEVDDGSDDDGTENPPAVAAEHSTAKKKKNKKRKPKKKQPKVQTDPPSIPLSQLFPNNSYPKGEEVEYKDENRYRTTSEEKRHLDNLNSDFLSDYRQAAEAHRQVRQWAQRNIKPGQTLLEIANGIEESARCLVGHDGLTEGDSLIAGMGFPTGLNIDNIVAHYSPNAGCKTVLAQNNVLKVDIGIHVGGRIVDSAFTMAFDPMYDNLLAAVKDATNTGVREAGIDVRVGELGGYIQEAMESYECEIRGKTYPIKAIRNLCGHTILPYSIHGTKNVPFVKSNDMTKMEEGDVFAIETFGSTGSGRYVEGGEVSHYALRGDADRKDLTLSSARSLLTAIKKNFSTIPFCRRYLDRIGQEKYLLGLNYLVKSGIVEDYPPLNEKPGTYTAQFEHTILLRPTVKEVISRGDDY.

A disordered region spans residues 14 to 116 (ITDAGANGAD…ENRYRTTSEE (103 aa)). The segment covering 61–76 (AKKKKNKKRKPKKKQP) has biased composition (basic residues). Residues 86-96 (PLSQLFPNNSY) show a composition bias toward polar residues. Residues 98–116 (KGEEVEYKDENRYRTTSEE) are compositionally biased toward basic and acidic residues. His-199 contacts substrate. A divalent metal cation-binding residues include Asp-219, Asp-230, and His-299. His-307 contacts substrate. Glu-332 and Glu-427 together coordinate a divalent metal cation.

The protein belongs to the peptidase M24A family. Methionine aminopeptidase eukaryotic type 2 subfamily. Co(2+) serves as cofactor. The cofactor is Zn(2+). It depends on Mn(2+) as a cofactor. Fe(2+) is required as a cofactor.

It is found in the cytoplasm. The catalysed reaction is Release of N-terminal amino acids, preferentially methionine, from peptides and arylamides.. In terms of biological role, cotranslationally removes the N-terminal methionine from nascent proteins. The N-terminal methionine is often cleaved when the second residue in the primary sequence is small and uncharged (Met-Ala-, Cys, Gly, Pro, Ser, Thr, or Val). This Aspergillus fumigatus (strain CBS 144.89 / FGSC A1163 / CEA10) (Neosartorya fumigata) protein is Methionine aminopeptidase 2-3.